We begin with the raw amino-acid sequence, 827 residues long: MEEIEEGSSNNSIRRVGTGSSDRRWVDGSEVDSETPLFSEIRDRDYSFGNLRRRLMKKPKRADSLDVEAMEIAGSHGHNLKDLSLLTTLGIAFQTLGVVYGDMGTSPLYVFSDVFSKVPIRSEVDVLGALSLVIYTIAVIPLAKYVFVVLKANDNGEGGTFALYSLICRYAKVNKLPNQQPADEQISSFRLKLPTPELERALGIKEALETKGYLKTLLLLLVLMGTSMIIGDGILTPAMSVMSAMSGLQGEVKGFGTNALVMSSIVILVALFSIQRFGTGKVGFLFAPVLALWFFSLGAIGIYNLLKYDFTVIRALNPFYIVLFFNKNSKQAWSALGGCVLCITGAEAMFADLGHFSVRSIQMAFTCVVFPCLLLAYMGQAAYLTKHPEASARIFYDSVPKSLFWPVFVIATLAAMIASQAMISATFSCVKQAMALGCFPRLKIIHTSKKRIGQIYIPVINWFLMIMCILVVSIFRSTTHIANAYGIAEVGVMMVSTVLVTLVMLLIWQTNIFLALCFPLIFGSVETIYLLAVLTKILEGGWVPLVFATFFLTVMYIWNYGSVLKYQSEVRERISMDFMRELGSTLGTIRIPGIGLLYNELVQGIPSIFGQFLLTLPAIHSTIIFVCIKYVPVPVVPQEERFLFRRVCPKDYHMFRCIARYGYKDVRKEDSRVFEQLLIESLEKFLRCEALEDALESTLNDFDPDRVSVASDTYTDDLMAPLIHRAKRSEPEQELDSEVLPSSSVGSSMEEDPALEYELAALREATDSGLTYLLAHGDVRAKKNSIFVKKLVINYFYAFLRRNCRAGAANLTVPHMNILQAGMTYMV.

Residues 1-31 (MEEIEEGSSNNSIRRVGTGSSDRRWVDGSEV) are disordered. At 1 to 82 (MEEIEEGSSN…AGSHGHNLKD (82 aa)) the chain is on the cytoplasmic side. Residues 83-103 (LSLLTTLGIAFQTLGVVYGDM) form a helical membrane-spanning segment. Topologically, residues 104–129 (GTSPLYVFSDVFSKVPIRSEVDVLGA) are extracellular. A helical membrane pass occupies residues 130 to 150 (LSLVIYTIAVIPLAKYVFVVL). Residues 151-216 (KANDNGEGGT…ALETKGYLKT (66 aa)) are Cytoplasmic-facing. A helical transmembrane segment spans residues 217–237 (LLLLLVLMGTSMIIGDGILTP). Residues 238 to 253 (AMSVMSAMSGLQGEVK) are Extracellular-facing. The helical transmembrane segment at 254–274 (GFGTNALVMSSIVILVALFSI) threads the bilayer. At 275–281 (QRFGTGK) the chain is on the cytoplasmic side. A helical membrane pass occupies residues 282–302 (VGFLFAPVLALWFFSLGAIGI). At 303–335 (YNLLKYDFTVIRALNPFYIVLFFNKNSKQAWSA) the chain is on the extracellular side. Residues 336–356 (LGGCVLCITGAEAMFADLGHF) traverse the membrane as a helical segment. The Cytoplasmic segment spans residues 357 to 363 (SVRSIQM). A helical transmembrane segment spans residues 364–384 (AFTCVVFPCLLLAYMGQAAYL). The Extracellular segment spans residues 385 to 402 (TKHPEASARIFYDSVPKS). The chain crosses the membrane as a helical span at residues 403–423 (LFWPVFVIATLAAMIASQAMI). Residues 424-454 (SATFSCVKQAMALGCFPRLKIIHTSKKRIGQ) lie on the Cytoplasmic side of the membrane. Residues 455-475 (IYIPVINWFLMIMCILVVSIF) traverse the membrane as a helical segment. Residues 476-480 (RSTTH) are Extracellular-facing. Helical transmembrane passes span 481–501 (IANA…VLVT) and 502–522 (LVML…PLIF). Residues 523–536 (GSVETIYLLAVLTK) are Extracellular-facing. Residues 537–557 (ILEGGWVPLVFATFFLTVMYI) traverse the membrane as a helical segment. Topologically, residues 558–827 (WNYGSVLKYQ…ILQAGMTYMV (270 aa)) are cytoplasmic. A disordered region spans residues 728–750 (RSEPEQELDSEVLPSSSVGSSME). Low complexity predominate over residues 738-748 (EVLPSSSVGSS).

It belongs to the HAK/KUP transporter (TC 2.A.72.3) family.

It localises to the cell membrane. Its function is as follows. Putative potassium transporter. The sequence is that of Putative potassium transporter 12 (POT12) from Arabidopsis thaliana (Mouse-ear cress).